Consider the following 514-residue polypeptide: Threonine synthase (514 aa).

K124 is subject to N6-(pyridoxal phosphate)lysine. The pyridoxal 5'-phosphate site is built by G277, N278, F279, D281, and T449. The residue at position 467 (S467) is a Phosphoserine.

This sequence belongs to the threonine synthase family. Pyridoxal 5'-phosphate serves as cofactor.

The catalysed reaction is O-phospho-L-homoserine + H2O = L-threonine + phosphate. It participates in amino-acid biosynthesis; L-threonine biosynthesis; L-threonine from L-aspartate: step 5/5. Functionally, catalyzes the gamma-elimination of phosphate from L-phosphohomoserine and the beta-addition of water to produce L-threonine. The protein is Threonine synthase (THR4) of Saccharomyces cerevisiae (strain ATCC 204508 / S288c) (Baker's yeast).